The following is a 478-amino-acid chain: RNA-binding protein 42 (478 aa).

Over residues methionine 1–proline 20 the composition is skewed to low complexity. Residues methionine 1–serine 33 form a disordered region. An N-acetylalanine modification is found at alanine 2. Serine 133 is subject to Phosphoserine. Arginine 151, arginine 156, arginine 166, and arginine 179 each carry asymmetric dimethylarginine. Disordered regions lie at residues leucine 171–proline 207 and serine 317–leucine 354. The span at proline 193–leucine 205 shows a compositional bias: pro residues. A necessary for interaction with HNRNPK region spans residues glutamate 234 to arginine 478. Residues glycine 343–leucine 354 are compositionally biased toward basic and acidic residues. Positions phenylalanine 379–tryptophan 457 constitute an RRM domain.

The protein belongs to the RRM RBM42 family. As to quaternary structure, interacts with HNRNPK. In terms of tissue distribution, expressed in cell lines (at protein level). Expressed in heart, brain, spleen, lung, liver, skeletal muscle, kidney and testis.

Its subcellular location is the nucleus. It is found in the cytoplasm. Its function is as follows. Binds (via the RRM domain) to the 3'-untranslated region (UTR) of CDKN1A mRNA. The sequence is that of RNA-binding protein 42 (Rbm42) from Mus musculus (Mouse).